We begin with the raw amino-acid sequence, 233 residues long: Mediator of RNA polymerase II transcription subunit 7 (233 aa).

Residue K185 forms a Glycyl lysine isopeptide (Lys-Gly) (interchain with G-Cter in SUMO1); alternate linkage. K185 is covalently cross-linked (Glycyl lysine isopeptide (Lys-Gly) (interchain with G-Cter in SUMO2); alternate). The tract at residues P188–D213 is disordered. S194 carries the post-translational modification Phosphoserine. Residues Q203–D213 show a composition bias toward basic and acidic residues.

The protein belongs to the Mediator complex subunit 7 family. In terms of assembly, component of the Mediator complex, which is composed of MED1, MED4, MED6, MED7, MED8, MED9, MED10, MED11, MED12, MED13, MED13L, MED14, MED15, MED16, MED17, MED18, MED19, MED20, MED21, MED22, MED23, MED24, MED25, MED26, MED27, MED29, MED30, MED31, CCNC, CDK8 and CDC2L6/CDK11. The MED12, MED13, CCNC and CDK8 subunits form a distinct module termed the CDK8 module. Mediator containing the CDK8 module is less active than Mediator lacking this module in supporting transcriptional activation. Individual preparations of the Mediator complex lacking one or more distinct subunits have been variously termed ARC, CRSP, DRIP, PC2, SMCC and TRAP.

It is found in the nucleus. Component of the Mediator complex, a coactivator involved in the regulated transcription of nearly all RNA polymerase II-dependent genes. Mediator functions as a bridge to convey information from gene-specific regulatory proteins to the basal RNA polymerase II transcription machinery. Mediator is recruited to promoters by direct interactions with regulatory proteins and serves as a scaffold for the assembly of a functional preinitiation complex with RNA polymerase II and the general transcription factors. The chain is Mediator of RNA polymerase II transcription subunit 7 (MED7) from Sus scrofa (Pig).